The sequence spans 247 residues: ATP synthase subunit a, chloroplastic (247 aa).

5 consecutive transmembrane segments (helical) span residues 38-58 (QVLI…TLAV), 95-115 (VPFI…GALL), 134-154 (INTT…AGLT), 199-219 (LVVV…VMFL), and 220-240 (GLFT…AYIG).

The protein belongs to the ATPase A chain family. In terms of assembly, F-type ATPases have 2 components, CF(1) - the catalytic core - and CF(0) - the membrane proton channel. CF(1) has five subunits: alpha(3), beta(3), gamma(1), delta(1), epsilon(1). CF(0) has four main subunits: a, b, b' and c.

It localises to the plastid. The protein resides in the chloroplast thylakoid membrane. Functionally, key component of the proton channel; it plays a direct role in the translocation of protons across the membrane. The chain is ATP synthase subunit a, chloroplastic from Guizotia abyssinica (Niger).